The following is a 392-amino-acid chain: Selenide, water dikinase 1 (392 aa).

Ser2 is modified (N-acetylserine). Residue Cys31 is part of the active site. ATP contacts are provided by residues Lys32, 67–69 (GMD), Asp87, Asp110, and 161–164 (GGQT). Asp69 serves as a coordination point for Mg(2+). Asp110 contributes to the Mg(2+) binding site. Asp265 lines the Mg(2+) pocket.

The protein belongs to the selenophosphate synthase 1 family. Class II subfamily. As to quaternary structure, homodimer. Mg(2+) is required as a cofactor.

It is found in the cell membrane. The protein resides in the nucleus membrane. The enzyme catalyses hydrogenselenide + ATP + H2O = selenophosphate + AMP + phosphate + 2 H(+). Functionally, synthesizes selenophosphate from selenide and ATP. The sequence is that of Selenide, water dikinase 1 (Sephs1) from Mus musculus (Mouse).